The chain runs to 985 residues: UPF0182 protein Cgl0786/cg0896 (985 aa).

7 helical membrane-spanning segments follow: residues 19-39, 63-83, 115-135, 176-196, 215-235, 262-282, and 290-310; these read VTWI…SVGF, IVLF…AGYF, VMVI…QRSW, SMML…MGGI, TQLA…YWLD, KIIL…AIFL, and LAVV…PLML. The segment at 904–944 is disordered; that stretch reads KEAQDIEEVDGTATTPSTDETDTDTDQPATETPTAPVSEAE. Residues 929–939 show a composition bias toward low complexity; sequence DQPATETPTAP.

It belongs to the UPF0182 family.

Its subcellular location is the cell membrane. In Corynebacterium glutamicum (strain ATCC 13032 / DSM 20300 / JCM 1318 / BCRC 11384 / CCUG 27702 / LMG 3730 / NBRC 12168 / NCIMB 10025 / NRRL B-2784 / 534), this protein is UPF0182 protein Cgl0786/cg0896.